Here is a 241-residue protein sequence, read N- to C-terminus: MATVSMRDMLKAGVHFGHQTRYWNPKMKPFIFGARNKVHIINLEKTVPMFNEALAELNKIVSRKGKILFVGTKRAASEAVKDAALSCDQFFVNHRWLGGMLTNWKTVRQSIKRLKDLETQSQDGTFDKLTKKEALMRTRELEKLENSLGGIKDMGGLPDALFVIDADHEHIAIKEANNLGIPVFAIVDTNSDPDGVDFVIPGNDDAIRAVTLYLGAVAATVREGRSQDLASQAEESFVEAE.

The protein belongs to the universal ribosomal protein uS2 family.

In Shigella flexneri serotype 5b (strain 8401), this protein is Small ribosomal subunit protein uS2.